Consider the following 302-residue polypeptide: MYYGFDVGGTKIEFGAFNEKLERVATERVPTPTEDYQLLLDTIAGLVKKYDNEFSCEGKIGLGLPGMEDADDGTMLVVNVPASTGKPLRKDLEALIGRSVKIENDANCFALSEAWDDELKDEPSVAGLILGTGFGGGLVYEGKVFSGRNHVAGELGHMRLPLDAWFHLGDNAPLLGCGCGKKGCLDSYLSGRGFELIYEHYFGEKKKAIEIIQAYNEGESKAAEHVDRFMELLAICFANLFTGLDPHVVALGGGLSNFELIYEEMPKRIPKYLLSVAKCPKIIKAKHGDSGGVRGAAFLNIK.

ATP contacts are provided by residues Gly4 to Lys11 and Gly133 to Tyr140. The Zn(2+) site is built by His157, Cys177, Cys179, and Cys184.

It belongs to the ROK (NagC/XylR) family. NagK subfamily.

The catalysed reaction is N-acetyl-D-glucosamine + ATP = N-acetyl-D-glucosamine 6-phosphate + ADP + H(+). It participates in cell wall biogenesis; peptidoglycan recycling. Functionally, catalyzes the phosphorylation of N-acetyl-D-glucosamine (GlcNAc) derived from cell-wall degradation, yielding GlcNAc-6-P. The sequence is that of N-acetyl-D-glucosamine kinase from Vibrio atlanticus (strain LGP32) (Vibrio splendidus (strain Mel32)).